Here is a 158-residue protein sequence, read N- to C-terminus: SsrA-binding protein (158 aa).

A compositionally biased stretch (basic and acidic residues) spans 136-151 (KRADSKSRDWARDKQR). Residues 136 to 158 (KRADSKSRDWARDKQRIMKHSTR) form a disordered region.

The protein belongs to the SmpB family.

The protein resides in the cytoplasm. Its function is as follows. Required for rescue of stalled ribosomes mediated by trans-translation. Binds to transfer-messenger RNA (tmRNA), required for stable association of tmRNA with ribosomes. tmRNA and SmpB together mimic tRNA shape, replacing the anticodon stem-loop with SmpB. tmRNA is encoded by the ssrA gene; the 2 termini fold to resemble tRNA(Ala) and it encodes a 'tag peptide', a short internal open reading frame. During trans-translation Ala-aminoacylated tmRNA acts like a tRNA, entering the A-site of stalled ribosomes, displacing the stalled mRNA. The ribosome then switches to translate the ORF on the tmRNA; the nascent peptide is terminated with the 'tag peptide' encoded by the tmRNA and targeted for degradation. The ribosome is freed to recommence translation, which seems to be the essential function of trans-translation. The chain is SsrA-binding protein from Photobacterium profundum (strain SS9).